Here is an 86-residue protein sequence, read N- to C-terminus: Large ribosomal subunit protein uL23 (86 aa).

It belongs to the universal ribosomal protein uL23 family. Part of the 50S ribosomal subunit. Contacts protein L29.

Functionally, binds to 23S rRNA. One of the proteins that surrounds the polypeptide exit tunnel on the outside of the ribosome. In Thermococcus gammatolerans (strain DSM 15229 / JCM 11827 / EJ3), this protein is Large ribosomal subunit protein uL23.